Here is a 219-residue protein sequence, read N- to C-terminus: Abasic site processing protein YobE (219 aa).

Residue Cys2 is the Nucleophile of the active site. The residue at position 2 (Cys2) is a Thiazolidine linkage to a ring-opened DNA abasic site. Glu106 is a catalytic residue.

This sequence belongs to the SOS response-associated peptidase family.

With respect to regulation, formation and reversal of DNA-protein cross-link depends on DNA context. Catalyzes formation of the thiazolidine linkage in presence of abasic sites in single-stranded DNA. Mediates the reversal of the thiazolidine cross-link in presence of double stranded DNA. Functionally, sensor of abasic sites in single-stranded DNA (ssDNA) required to preserve genome integrity by promoting error-free repair of abasic sites. Recognizes and binds abasic sites in ssDNA at replication forks and chemically modifies the lesion by forming a covalent cross-link with DNA: forms a stable thiazolidine linkage between a ring-opened abasic site and the alpha-amino and sulfhydryl substituents of its N-terminal catalytic cysteine residue. The DNA-protein cross-link is then reversed: able to catalyze the reversal of the thiazolidine cross-link and cycle between a cross-link and a non-cross-linked state depending on DNA context: mediates self-reversal of the thiazolidine cross-link in double stranded DNA. May act as a protease: mediates autocatalytic processing of its N-terminal methionine in order to expose the catalytic cysteine. This is Abasic site processing protein YobE (yobE) from Bacillus subtilis (strain 168).